A 45-amino-acid polypeptide reads, in one-letter code: Temporin-SHf (45 aa).

Residues 1–10 (FLGTINLSLC) form the signal peptide. The propeptide occupies 11–35 (EEERDADEEERRDEPDESNVEVKKR). Phe-43 bears the Phenylalanine amide mark.

The protein belongs to the frog skin active peptide (FSAP) family. Temporin subfamily.

It is found in the secreted. The protein localises to the target cell membrane. Non-amphipathic alpha-helical antimicrobial peptide with potent activity against some Gram-positive bacteria (including methicillin-resistant Staphylococcus aureus (MRSA)), weak activity against Gram-negative bacteria and no activity against fungi. Permeabilizates membranes through a detergent-like effect probably via the carpet mechanism. More precisely, it strongly and selectively perturbs anionic bilayers membranes by interacting with the polar headgroups and the glycerol backbone region of the phospholipids, hence disrupting the acyl chain packing of the bilayer. Is not active against Leishmania (promastigote and axenic amastigote forms). Does not show hemolytic activity. Does not show toxicity for human THP-1-derived macrophages. The protein is Temporin-SHf of Pelophylax saharicus (Sahara frog).